The following is a 931-amino-acid chain: Myelin regulatory factor homolog 1 (931 aa).

Residues 1-658 (MSSSDLLKGE…SCGSRLSQGT (658 aa)) lie on the Cytoplasmic side of the membrane. The interval 29-143 (TDEDDGSMVS…QQHQQTRGGN (115 aa)) is disordered. A compositionally biased stretch (polar residues) spans 37 to 52 (VSPTSSADSMHQNLGV). The span at 53–68 (QQQQQQMLQAQQRQNQ) shows a compositional bias: low complexity. The span at 117–126 (DNGNQTMNNI) shows a compositional bias: polar residues. Positions 127–138 (QSQQLSQQQHQQ) are enriched in low complexity. A DNA-binding region (NDT80) is located at residues 169–436 (GTAAVNQPTN…TNPGSFEPQD (268 aa)). One can recognise a Peptidase S74 domain in the interval 483 to 582 (SDIRLKEAIT…RMTGDLDSKI (100 aa)). Residues 659 to 679 (VVTLVSIMAACLLAMSALYVL) form a helical membrane-spanning segment. The Lumenal portion of the chain corresponds to 680-931 (DWHNRNYGYH…FYRMCTLSSS (252 aa)). N-linked (GlcNAc...) asparagine glycosylation is found at Asn-797 and Asn-912.

It belongs to the MRF family. In terms of assembly, homotrimer. Interacts with myrf-2. Interacts (via C-terminus) with pan-1 (via LRR regions); the interaction promotes the role of myrf-1 in the synaptic remodeling of DD GABAergic motor neurons at the cell membrane. Post-translationally, myelin regulatory factor: Follows autocatalytic cleavage via the peptidase S74 domain. Autoprocessing is apparently constitutive and is essential for transcriptional activity. As to expression, widely expressed in many tissues, including neuronal, muscle and epidermal stem cells. In neurons, expressed in dorsal D (DD) GABAergic motor neurons.

The protein resides in the endoplasmic reticulum membrane. Its subcellular location is the nucleus. It is found in the apical cell membrane. The protein localises to the cytoplasm. In terms of biological role, constitutes a precursor of the transcription factor. Mediates the autocatalytic cleavage that releases the Myelin regulatory factor homolog 1, N-terminal component that specifically activates transcription of genes involved in synaptic rewiring during nervous system maturation. Membrane-bound part that has no transcription factor activity and remains attached to the endoplasmic reticulum membrane following cleavage. Functionally, transcription factor that specifically activates expression of genes involved in synaptic rewiring during nervous system maturation. Specifically required for dorsal D (DD) GABAergic motor neurons synaptic rewiring. Acts in complex with myrf-2 paralog. The chain is Myelin regulatory factor homolog 1 from Caenorhabditis elegans.